The primary structure comprises 391 residues: tRNA-specific 2-thiouridylase MnmA (391 aa).

ATP-binding positions include 9–16 and methionine 35; that span reads GMSGGVDS. An interaction with target base in tRNA region spans residues 95–97; it reads NPD. The active-site Nucleophile is the cysteine 100. Cysteines 100 and 196 form a disulfide. Glycine 124 lines the ATP pocket. An interaction with tRNA region spans residues 146-148; it reads KDQ. The active-site Cysteine persulfide intermediate is cysteine 196. Positions 308–309 are interaction with tRNA; the sequence is RY.

The protein belongs to the MnmA/TRMU family.

It is found in the cytoplasm. The enzyme catalyses S-sulfanyl-L-cysteinyl-[protein] + uridine(34) in tRNA + AH2 + ATP = 2-thiouridine(34) in tRNA + L-cysteinyl-[protein] + A + AMP + diphosphate + H(+). Functionally, catalyzes the 2-thiolation of uridine at the wobble position (U34) of tRNA, leading to the formation of s(2)U34. This is tRNA-specific 2-thiouridylase MnmA from Burkholderia orbicola (strain MC0-3).